The sequence spans 1203 residues: DNA-directed RNA polymerase subunit beta' (1203 aa).

Cys-60, Cys-62, Cys-75, and Cys-78 together coordinate Zn(2+). Residues Asp-449, Asp-451, and Asp-453 each contribute to the Mg(2+) site. Cys-818, Cys-892, Cys-899, and Cys-902 together coordinate Zn(2+). The interval 1180–1203 (RNLESGLDMPESAEESSEEETQTV) is disordered. The span at 1190–1203 (ESAEESSEEETQTV) shows a compositional bias: acidic residues.

The protein belongs to the RNA polymerase beta' chain family. The RNAP catalytic core consists of 2 alpha, 1 beta, 1 beta' and 1 omega subunit. When a sigma factor is associated with the core the holoenzyme is formed, which can initiate transcription. Requires Mg(2+) as cofactor. The cofactor is Zn(2+).

It carries out the reaction RNA(n) + a ribonucleoside 5'-triphosphate = RNA(n+1) + diphosphate. Its function is as follows. DNA-dependent RNA polymerase catalyzes the transcription of DNA into RNA using the four ribonucleoside triphosphates as substrates. This Oceanobacillus iheyensis (strain DSM 14371 / CIP 107618 / JCM 11309 / KCTC 3954 / HTE831) protein is DNA-directed RNA polymerase subunit beta'.